The primary structure comprises 518 residues: Probable lysine--tRNA ligase, cytoplasmic (518 aa).

It belongs to the class-II aminoacyl-tRNA synthetase family. Homodimer.

The protein localises to the cytoplasm. The enzyme catalyses tRNA(Lys) + L-lysine + ATP = L-lysyl-tRNA(Lys) + AMP + diphosphate. The chain is Probable lysine--tRNA ligase, cytoplasmic from Enterocytozoon bieneusi (strain H348) (Microsporidian parasite).